The chain runs to 203 residues: Superoxide dismutase [Mn] (203 aa).

4 residues coordinate Mn(2+): histidine 31, histidine 79, aspartate 161, and histidine 165.

The protein belongs to the iron/manganese superoxide dismutase family. Mn(2+) serves as cofactor.

The enzyme catalyses 2 superoxide + 2 H(+) = H2O2 + O2. Its function is as follows. Destroys superoxide anion radicals which are normally produced within the cells and which are toxic to biological systems. This is Superoxide dismutase [Mn] (sod) from Haloarcula marismortui (strain ATCC 43049 / DSM 3752 / JCM 8966 / VKM B-1809) (Halobacterium marismortui).